The chain runs to 91 residues: Probable Fe(2+)-trafficking protein (91 aa).

This sequence belongs to the Fe(2+)-trafficking protein family.

Functionally, could be a mediator in iron transactions between iron acquisition and iron-requiring processes, such as synthesis and/or repair of Fe-S clusters in biosynthetic enzymes. This Xanthomonas axonopodis pv. citri (strain 306) protein is Probable Fe(2+)-trafficking protein.